A 296-amino-acid polypeptide reads, in one-letter code: Glycine--tRNA ligase alpha subunit (296 aa).

It belongs to the class-II aminoacyl-tRNA synthetase family. In terms of assembly, tetramer of two alpha and two beta subunits.

It is found in the cytoplasm. It carries out the reaction tRNA(Gly) + glycine + ATP = glycyl-tRNA(Gly) + AMP + diphosphate. This chain is Glycine--tRNA ligase alpha subunit, found in Prochlorococcus marinus (strain SARG / CCMP1375 / SS120).